A 163-amino-acid polypeptide reads, in one-letter code: uncharacterized protein (163 aa).

Positions 23–113 (DFPEEPPLWV…QVADGVHSQQ (91 aa)) are disordered. Ser102 carries the post-translational modification Phosphoserine.

This is an uncharacterized protein from Mus musculus (Mouse).